Here is an 818-residue protein sequence, read N- to C-terminus: Sorting nexin-29 (818 aa).

Residues 36-180 (SDSDSRVTCL…ILFAINIDNK (145 aa)) form the RUN domain. A disordered region spans residues 267 to 299 (VSFDDDEEEQGTGDTLKKMPGTAESSEENSDRS). Phosphoserine is present on residues serine 268, serine 291, serine 292, serine 330, serine 344, serine 447, and serine 452. 2 disordered regions span residues 343–375 (KSID…PDRT) and 441–462 (RYRE…PSAS). A compositionally biased stretch (low complexity) spans 445-462 (ASSPGQGSPLSSLLPSAS). Residues 467–547 (MTVHELRQAI…VLKVQLKKYV (81 aa)) are a coiled coil. Serine 642 is modified (phosphoserine). Threonine 644 is subject to Phosphothreonine. A phosphoserine mark is found at serine 645 and serine 649. Residues 659 to 782 (ALINVWIPSV…PFFVDITPPG (124 aa)) enclose the PX domain. Residues 781–818 (PGEPLNKSSRPKAVSRFPKLSRGHPREVRNVEPQSGDL) are disordered.

The protein belongs to the sorting nexin family.

This chain is Sorting nexin-29 (Snx29), found in Mus musculus (Mouse).